Consider the following 94-residue polypeptide: Co-chaperonin GroES (94 aa).

The protein belongs to the GroES chaperonin family. As to quaternary structure, heptamer of 7 subunits arranged in a ring. Interacts with the chaperonin GroEL.

It localises to the cytoplasm. Its function is as follows. Together with the chaperonin GroEL, plays an essential role in assisting protein folding. The GroEL-GroES system forms a nano-cage that allows encapsulation of the non-native substrate proteins and provides a physical environment optimized to promote and accelerate protein folding. GroES binds to the apical surface of the GroEL ring, thereby capping the opening of the GroEL channel. This is Co-chaperonin GroES from Clostridium kluyveri (strain NBRC 12016).